Here is a 392-residue protein sequence, read N- to C-terminus: Stilbene synthase 6 (392 aa).

Residue 55–58 (KFNR) participates in substrate binding. Residue cysteine 164 is part of the active site. Substrate contacts are provided by residues leucine 267 and 305–307 (GGP).

Belongs to the thiolase-like superfamily. Chalcone/stilbene synthases family. In terms of assembly, homodimer.

The protein localises to the cytoplasm. It catalyses the reaction 4-coumaroyl-CoA + 3 malonyl-CoA + 3 H(+) = trans-resveratrol + 4 CO2 + 4 CoA. It functions in the pathway phytoalexin biosynthesis; 3,4',5-trihydroxystilbene biosynthesis; 3,4',5-trihydroxystilbene from trans-4-coumarate: step 2/2. Functionally, mediates resistance to pathogens which are sensitive to stilbenes. This is Stilbene synthase 6 (STS) from Vitis vinifera (Grape).